The primary structure comprises 248 residues: Phosphate import ATP-binding protein PstB (248 aa).

The ABC transporter domain maps to M1–I243. G33–S40 is a binding site for ATP.

Belongs to the ABC transporter superfamily. Phosphate importer (TC 3.A.1.7) family. In terms of assembly, the complex is composed of two ATP-binding proteins (PstB), two transmembrane proteins (PstC and PstA) and a solute-binding protein (PstS).

Its subcellular location is the cell inner membrane. The catalysed reaction is phosphate(out) + ATP + H2O = ADP + 2 phosphate(in) + H(+). Part of the ABC transporter complex PstSACB involved in phosphate import. Responsible for energy coupling to the transport system. This is Phosphate import ATP-binding protein PstB from Rhodospirillum rubrum (strain ATCC 11170 / ATH 1.1.1 / DSM 467 / LMG 4362 / NCIMB 8255 / S1).